The primary structure comprises 310 residues: tRNA dimethylallyltransferase (310 aa).

Residue 10–17 (GPTAVGKS) participates in ATP binding. 12–17 (TAVGKS) contributes to the substrate binding site. Positions 35-38 (DSMQ) are interaction with substrate tRNA.

The protein belongs to the IPP transferase family. In terms of assembly, monomer. Mg(2+) serves as cofactor.

The catalysed reaction is adenosine(37) in tRNA + dimethylallyl diphosphate = N(6)-dimethylallyladenosine(37) in tRNA + diphosphate. Its function is as follows. Catalyzes the transfer of a dimethylallyl group onto the adenine at position 37 in tRNAs that read codons beginning with uridine, leading to the formation of N6-(dimethylallyl)adenosine (i(6)A). This Clostridium perfringens (strain 13 / Type A) protein is tRNA dimethylallyltransferase.